We begin with the raw amino-acid sequence, 127 residues long: Large ribosomal subunit protein bL17 (127 aa).

It belongs to the bacterial ribosomal protein bL17 family. In terms of assembly, part of the 50S ribosomal subunit. Contacts protein L32.

The polypeptide is Large ribosomal subunit protein bL17 (Leuconostoc mesenteroides subsp. mesenteroides (strain ATCC 8293 / DSM 20343 / BCRC 11652 / CCM 1803 / JCM 6124 / NCDO 523 / NBRC 100496 / NCIMB 8023 / NCTC 12954 / NRRL B-1118 / 37Y)).